A 963-amino-acid polypeptide reads, in one-letter code: Adhesion G protein-coupled receptor D2 (963 aa).

Residues 1–662 (MDAPWGAGER…EEESLLRTLS (662 aa)) lie on the Extracellular side of the membrane. The tract at residues 18 to 38 (DRSGVSLGPPPTPQVNQGTLG) is disordered. Residues 116–325 (TTAVLVFDER…LPTVWVRLLC (210 aa)) form the Pentraxin (PTX) domain. A disulfide bridge connects residues C146 and C212. N-linked (GlcNAc...) asparagine glycosylation is present at N271. Positions 489–649 (MALVASVQRL…AILLQIYEVQ (161 aa)) constitute a GAIN-B domain. Residues 599-649 (PLFPPHPPSPYTGGAWATTGCSVAALYLDSTACFCNHSTSFAILLQIYEVQ) are GPS. An intrachain disulfide couples C619 to C633. N634 carries an N-linked (GlcNAc...) asparagine glycan. The helical transmembrane segment at 663-683 (FVGCGVSFCALTTTFLLFLVA) threads the bilayer. Over 684 to 691 (GVPKSERT) the chain is Cytoplasmic. A helical membrane pass occupies residues 692-712 (TVHKNLTFSLASAEGFLMTSE). Over 713–720 (WAKANEVA) the chain is Extracellular. The chain crosses the membrane as a helical span at residues 721-741 (CVAVTVAMHFLFLVAFSWMLV). Over 742–762 (EGLLLWRKVVAVSMHPGPGMR) the chain is Cytoplasmic. The helical transmembrane segment at 763-783 (LYHATGWGVPVGIVAVTLAML) threads the bilayer. Over 784 to 800 (PHDYVAPGHCWLNVHTN) the chain is Extracellular. Residues 801 to 821 (AIWAFVGPVLFVLTANTCILA) form a helical membrane-spanning segment. Residues 822–857 (RVVMITVSSARRRARMLSPQPCLQQQIWTQIWATVK) are Cytoplasmic-facing. Residues 858 to 878 (PVLVLLPVLGLTWLAGILVHL) traverse the membrane as a helical segment. Residues 879–880 (SP) lie on the Extracellular side of the membrane. The chain crosses the membrane as a helical span at residues 881–901 (AWAYAAVGLNSIQGLYIFLVY). The Cytoplasmic portion of the chain corresponds to 902–963 (AACNEEVRSA…TPRHPLKAPA (62 aa)).

It belongs to the G-protein coupled receptor 2 family. Adhesion G-protein coupled receptor (ADGR) subfamily.

It localises to the membrane. Its function is as follows. Orphan receptor. The protein is Adhesion G protein-coupled receptor D2 (ADGRD2) of Homo sapiens (Human).